A 1892-amino-acid chain; its full sequence is Plexin A3 (1892 aa).

A signal peptide spans 1 to 20 (MRSLWLLVFSFSVLTGTNMA). The region spanning 21–509 (FPMILSERPE…SDKQVSRLPV (489 aa)) is the Sema domain. The Extracellular portion of the chain corresponds to 21-1240 (FPMILSERPE…IYSDSTLTLP (1220 aa)). A glycan (N-linked (GlcNAc...) asparagine) is linked at asparagine 68. Intrachain disulfides connect cysteine 86/cysteine 95, cysteine 121/cysteine 129, cysteine 283/cysteine 404, cysteine 299/cysteine 355, cysteine 373/cysteine 392, cysteine 512/cysteine 529, cysteine 518/cysteine 560, cysteine 521/cysteine 538, and cysteine 532/cysteine 544. Asparagine 569 carries N-linked (GlcNAc...) asparagine glycosylation. Cysteine 595 and cysteine 615 are disulfide-bonded. 4 consecutive IPT/TIG domains span residues 861 to 955 (PRIT…YSFV), 957 to 1041 (PSFS…YIYT), 1044 to 1143 (PNIS…FTYY), and 1146 to 1232 (PTFE…LHIY). Residue asparagine 1183 is glycosylated (N-linked (GlcNAc...) asparagine). Residues 1241–1261 (AIIGIGAGGGVLLIAIIAVLI) traverse the membrane as a helical segment. A coiled-coil region spans residues 1262-1315 (AYKRKTRDADRTLKRLQLQMDNLESRVALECKEAFAELQTDIQELTNDMDGVKI). The Cytoplasmic segment spans residues 1262–1892 (AYKRKTRDAD…QAINLMSGSS (631 aa)).

The protein belongs to the plexin family. As to expression, detected in primary motor neurons in the embryonic nervous system.

It is found in the cell membrane. Functionally, coreceptor for class 3 semaphorins. Necessary for signaling by class 3 semaphorins and subsequent remodeling of the cytoskeleton. Plays a role in axon guidance in the developing nervous system. Class 3 semaphorins bind to a complex composed of a neuropilin and a plexin. The plexin modulates the affinity of the complex for specific semaphorins, and its cytoplasmic domain is required for the activation of down-stream signaling events in the cytoplasm. This Danio rerio (Zebrafish) protein is Plexin A3 (plxna3).